Consider the following 962-residue polypeptide: SH3 domain-binding protein 4 (962 aa).

An SH3 1 domain is found at 55–114; the sequence is GNAKEVIAIKDYCPNNFTTLKFSKGDHLYVLDTSGGEWWYAHNTTEMGYIPSSYVQPLNY. Phosphoserine occurs at positions 131, 245, 250, 278, and 295. In terms of domain architecture, ZU5 spans 316–453; that stretch reads TNIVCKLDSS…LEPCMYLAIV (138 aa). Ser-636 carries the phosphoserine modification. Positions 653 to 723 constitute an SH3 2 domain; the sequence is SSLKFGKLLK…HTKNVLVVGK (71 aa).

In terms of assembly, homodimer or homooligomer. Interacts with DNM2, EPS15, clathrin, the adapter protein complex 2/AP-2 and TFRC. Interacts with the Rag GTPases RRAGA, RRAGB, RRAGC and RRAGD; the interaction is most probably direct, preferentially occurs with their inactive GDP-bound form and is negatively regulated by amino acids. Post-translationally, phosphorylated upon EGF stimulation. Phosphorylation prevents interaction with DNM2.

Its subcellular location is the membrane. The protein localises to the clathrin-coated pit. It is found in the cytoplasmic vesicle. The protein resides in the clathrin-coated vesicle. It localises to the nucleus. Its function is as follows. May function in transferrin receptor internalization at the plasma membrane through a cargo-specific control of clathrin-mediated endocytosis. Alternatively, may act as a negative regulator of the amino acid-induced TOR signaling by inhibiting the formation of active Rag GTPase complexes. Preferentially binds inactive Rag GTPase complexes and prevents their interaction with the mTORC1 complex inhibiting its relocalization to lysosomes and its activation. Thereby, may indirectly regulate cell growth, proliferation and autophagy. The polypeptide is SH3 domain-binding protein 4 (Sh3bp4) (Mus musculus (Mouse)).